We begin with the raw amino-acid sequence, 421 residues long: 3-isopropylmalate dehydratase large subunit (421 aa).

Positions 301, 361, and 364 each coordinate [4Fe-4S] cluster.

It belongs to the aconitase/IPM isomerase family. LeuC type 2 subfamily. Heterodimer of LeuC and LeuD. It depends on [4Fe-4S] cluster as a cofactor.

It carries out the reaction (2R,3S)-3-isopropylmalate = (2S)-2-isopropylmalate. The protein operates within amino-acid biosynthesis; L-leucine biosynthesis; L-leucine from 3-methyl-2-oxobutanoate: step 2/4. Its function is as follows. Catalyzes the isomerization between 2-isopropylmalate and 3-isopropylmalate, via the formation of 2-isopropylmaleate. This is 3-isopropylmalate dehydratase large subunit from Desulfitobacterium hafniense (strain Y51).